We begin with the raw amino-acid sequence, 288 residues long: Protease HtpX (288 aa).

2 helical membrane passes run 5–25 and 35–55; these read IALF…VMSL and GLLV…LLLS. His140 serves as a coordination point for Zn(2+). Glu141 is an active-site residue. His144 is a Zn(2+) binding site. 2 helical membrane passes run 155–175 and 194–214; these read LLQG…GGII and IIVF…SMWF. Position 219 (Glu219) interacts with Zn(2+).

The protein belongs to the peptidase M48B family. It depends on Zn(2+) as a cofactor.

The protein resides in the cell inner membrane. The polypeptide is Protease HtpX (Stenotrophomonas maltophilia (strain K279a)).